A 360-amino-acid chain; its full sequence is Histidinol-phosphate aminotransferase (360 aa).

The residue at position 218 (K218) is an N6-(pyridoxal phosphate)lysine.

This sequence belongs to the class-II pyridoxal-phosphate-dependent aminotransferase family. Histidinol-phosphate aminotransferase subfamily. As to quaternary structure, homodimer. Pyridoxal 5'-phosphate is required as a cofactor.

It catalyses the reaction L-histidinol phosphate + 2-oxoglutarate = 3-(imidazol-4-yl)-2-oxopropyl phosphate + L-glutamate. It functions in the pathway amino-acid biosynthesis; L-histidine biosynthesis; L-histidine from 5-phospho-alpha-D-ribose 1-diphosphate: step 7/9. The polypeptide is Histidinol-phosphate aminotransferase (Pelagibacter ubique (strain HTCC1062)).